The sequence spans 385 residues: Non-structural maintenance of chromosomes element 4 homolog A (385 aa).

The tract at residues 1-69 (MSGDSSGRGP…PSDSGDEMMD (69 aa)) is disordered. Basic and acidic residues-rich tracts occupy residues 10–21 (PEGRGRGRDPHR) and 42–55 (SARERREAPERPSL). Residues 56–68 (EDTEPSDSGDEMM) are compositionally biased toward acidic residues. Phosphothreonine is present on threonine 345. Serine 377 is subject to Phosphoserine.

It belongs to the NSE4 family. Component of the SMC5-SMC6 complex which consists at least of SMC5, SMC6, NSMCE2, NSMCE1, NSMCE4A or EID3 and NSMCE3. NSMCE1, NSMCE4A or EID3 and NSMCE3 probably form a subcomplex that bridges the head domains of the SMC5:SMC6 heterodimer. Interacts with NSMCE3.

It is found in the nucleus. Its subcellular location is the chromosome. The protein resides in the telomere. Functionally, component of the SMC5-SMC6 complex, a complex involved in DNA double-strand breaks by homologous recombination. The complex may promote sister chromatid homologous recombination by recruiting the SMC1-SMC3 cohesin complex to double-strand breaks. The complex is required for telomere maintenance via recombination in ALT (alternative lengthening of telomeres) cell lines and mediates sumoylation of shelterin complex (telosome) components which is proposed to lead to shelterin complex disassembly in ALT-associated PML bodies (APBs). Is involved in positive regulation of response to DNA damage stimulus. This Homo sapiens (Human) protein is Non-structural maintenance of chromosomes element 4 homolog A (NSMCE4A).